A 625-amino-acid polypeptide reads, in one-letter code: Endoglucanase D (625 aa).

A signal peptide spans serine 1 to alanine 17. Residue aspartate 177 is the Nucleophile of the active site. Residues histidine 492 and aspartate 522 contribute to the active site. Glutamate 531 (proton donor) is an active-site residue. In terms of domain architecture, Dockerin spans asparagine 555 to isoleucine 625.

The protein belongs to the glycosyl hydrolase 9 (cellulase E) family. Ca(2+) serves as cofactor.

The enzyme catalyses Endohydrolysis of (1-&gt;4)-beta-D-glucosidic linkages in cellulose, lichenin and cereal beta-D-glucans.. Its function is as follows. This enzyme catalyzes the endohydrolysis of 1,4-beta-glucosidic linkages in cellulose, lichenin and cereal beta-D-glucans. In Acetivibrio thermocellus (Hungateiclostridium thermocellum), this protein is Endoglucanase D (celD).